The following is a 901-amino-acid chain: MMMVLQPEGLGTGEGPFAGGRGGGEYMEQEEDWDRDLLLDPAWEKQQRKTFTAWCNSHLRKAGTQIENIEEDFRNGLKLMLLLEVISGERLPRPDKGKMRFHKIANVNKALDFIASKGVKLVSIGAEEIVDGNLKMTLGMIWTIILRFAIQDISVEETSAKEGLLLWCQRKTAPYRNVNVQNFHTSWKDGLALCALIHRHRPDLIDYAKLRKDDPIGNLNTAFEVAEKYLDIPKMLDAEDIVNTPKPDEKAIMTYVSCFYHAFAGAEQAETAANRICKVLAVNQENEKLMEEYEKLASELLEWIRRTVPWLENRVGEPSMSAMQRKLEDFRDYRRLHKPPRVQEKCQLEINFNTLQTKLRLSHRPAFMPSEGKLVSDIANAWRGLEQAEKGYEDWLLSEIRRLQRLQHLAEKFQQKASLHEAWTRGKEDMLSQRDYETASLQEVRALLRRHEAFESDLAAHQDRVEHIAALAQELNELDYHEAASVNSRCQAICDQWDNLGTLTQKRRDALERMEKLLETIDQLQLEFARRAAPFNNWLDGAVEDLQDVWLVHSVEETQSLVTAHDQFKATLPEADRERGAILGIQGEIQKICQTYGLRPSSTNPYITLTPQDINTKWDTVRKLVPSRDQMLQEELTRQQVNERLRRQFAAQANAIGPWIQGKVEEVGRLAAGMAGSLEEQMAGLRQQEQNIINYKSNIDRLEGDHQLLQESLVFDNKHTVYSMEHIRVGWEQLLTSIARTINEVENQVLTRDAKGLSQEQLNEFRASFNHFDRKRNGMMEPDDFRACLISMGYDLGEVEFARIMTMVDPNAAGVVTFQAFIDFMTRETAETDTAEQVVASFKILAGDKNYITAEELRRELPAEQAEYCIRRMAPYKGAGAPAGALDYVAFSSALYGESDL.

M1 bears the N-acetylmethionine mark. Residues 1–261 are actin-binding; the sequence is MMMVLQPEGL…IMTYVSCFYH (261 aa). 2 Calponin-homology (CH) domains span residues 45 to 149 and 158 to 264; these read KQQR…LRFA and TSAK…HAFA. 4 Spectrin repeats span residues 288–398, 408–513, 523–634, and 644–747; these read KLME…WLLS, HLAE…ALER, QLQL…MLQE, and RLRR…EVEN. 2 consecutive EF-hand domains span residues 760–795 and 796–831; these read EQLN…MGYD and LGEV…ETAE. 6 residues coordinate Ca(2+): D773, N777, M779, D784, D809, and N811.

The protein belongs to the alpha-actinin family. Homodimer; antiparallel. Also forms heterodimers with ACTN2. Interacts with MYOZ1.

F-actin cross-linking protein which is thought to anchor actin to a variety of intracellular structures. This is a bundling protein. The chain is Alpha-actinin-3 (ACTN3) from Bos taurus (Bovine).